A 448-amino-acid chain; its full sequence is Methylenetetrahydrofolate--tRNA-(uracil-5-)-methyltransferase TrmFO (448 aa).

Residue 13 to 18 (GAGLAG) coordinates FAD.

It belongs to the MnmG family. TrmFO subfamily. It depends on FAD as a cofactor.

It is found in the cytoplasm. It catalyses the reaction uridine(54) in tRNA + (6R)-5,10-methylene-5,6,7,8-tetrahydrofolate + NADH + H(+) = 5-methyluridine(54) in tRNA + (6S)-5,6,7,8-tetrahydrofolate + NAD(+). The enzyme catalyses uridine(54) in tRNA + (6R)-5,10-methylene-5,6,7,8-tetrahydrofolate + NADPH + H(+) = 5-methyluridine(54) in tRNA + (6S)-5,6,7,8-tetrahydrofolate + NADP(+). Catalyzes the folate-dependent formation of 5-methyl-uridine at position 54 (M-5-U54) in all tRNAs. The protein is Methylenetetrahydrofolate--tRNA-(uracil-5-)-methyltransferase TrmFO of Streptococcus pyogenes serotype M2 (strain MGAS10270).